The sequence spans 324 residues: Elongation factor Ts, mitochondrial (324 aa).

The transit peptide at 1-44 (MSLLRSLRFFPVACTGRSARAVLLQPSQPWHTLHAGPSLSSSAS) directs the protein to the mitochondrion. An N6-succinyllysine mark is found at K75 and K132. Position 269 is a phosphoserine (S269).

This sequence belongs to the EF-Ts family.

The protein resides in the mitochondrion. Its function is as follows. Associates with the EF-Tu.GDP complex and induces the exchange of GDP to GTP. It remains bound to the aminoacyl-tRNA.EF-Tu.GTP complex up to the GTP hydrolysis stage on the ribosome. In Rattus norvegicus (Rat), this protein is Elongation factor Ts, mitochondrial (Tsfm).